The primary structure comprises 266 residues: F-actin-capping protein subunit beta (266 aa).

The protein belongs to the F-actin-capping protein beta subunit family. In terms of assembly, component of the F-actin capping complex, composed of a heterodimer of an alpha and a beta subunit.

The protein localises to the cytoplasm. The protein resides in the cytoskeleton. It is found in the actin patch. F-actin-capping proteins bind in a Ca(2+)-independent manner to the fast growing ends of actin filaments (barbed end) thereby blocking the exchange of subunits at these ends. Unlike other capping proteins (such as gelsolin and severin), these proteins do not sever actin filaments. This is F-actin-capping protein subunit beta (cap2) from Emericella nidulans (strain FGSC A4 / ATCC 38163 / CBS 112.46 / NRRL 194 / M139) (Aspergillus nidulans).